Consider the following 142-residue polypeptide: Deoxyuridine 5'-triphosphate nucleotidohydrolase (142 aa).

Substrate contacts are provided by residues 62–64 (RSG), asparagine 75, and 79–81 (TID).

It belongs to the dUTPase family. It depends on Mg(2+) as a cofactor.

The enzyme catalyses dUTP + H2O = dUMP + diphosphate + H(+). It participates in pyrimidine metabolism; dUMP biosynthesis; dUMP from dCTP (dUTP route): step 2/2. In terms of biological role, this enzyme is involved in nucleotide metabolism: it produces dUMP, the immediate precursor of thymidine nucleotides and it decreases the intracellular concentration of dUTP so that uracil cannot be incorporated into DNA. This Crocosphaera subtropica (strain ATCC 51142 / BH68) (Cyanothece sp. (strain ATCC 51142)) protein is Deoxyuridine 5'-triphosphate nucleotidohydrolase.